The sequence spans 3587 residues: Tyrocidine synthase 2 (3587 aa).

Positions 466–1045 (AATMHELFSR…IQALAAYVEG (580 aa)) are domain 1 (Proline-activating). 2 Carrier domains span residues 972–1047 (APTT…EGGE) and 2007–2082 (APAT…EHSE). 2 positions are modified to O-(pantetheine 4'-phosphoryl)serine: Ser1007 and Ser2042. The segment at 1522–2081 (EQTAVVFGDK…RDLARLIEHS (560 aa)) is domain 2 (Phenylalanine-activating). Residues 2540-3122 (YRADQTIQQL…NSRESEQGVV (583 aa)) are domain 3 (D-phenylalanine-activating). Residues 3017 to 3040 (NDKIDRKALPKPNQEENRTEQYAA) form a disordered region. A compositionally biased stretch (basic and acidic residues) spans 3018–3035 (DKIDRKALPKPNQEENRT). The region spanning 3040-3114 (APQTELEQLL…EAALRVIPNS (75 aa)) is the Carrier 3 domain. An O-(pantetheine 4'-phosphoryl)serine modification is found at Ser3075.

This sequence belongs to the ATP-dependent AMP-binding enzyme family. Large multienzyme complex of TycA, TycB and TycC. The cofactor is pantetheine 4'-phosphate.

The enzyme catalyses L-phenylalanine + ATP + H2O = D-phenylalanine + AMP + diphosphate + H(+). Its pathway is antibiotic biosynthesis; tyrocidine biosynthesis. Its function is as follows. Activates the second to fourth amino acids in tyrocidine (in tyrocidine A, Pro, Phe, and D-Phe) and epimerizes the last one. This Brevibacillus parabrevis protein is Tyrocidine synthase 2 (tycB).